Here is an 829-residue protein sequence, read N- to C-terminus: Trimethylamine-N-oxide reductase (829 aa).

A signal peptide (tat-type signal) is located at residues 1–31 (MNRRDFLKGIASSSFVVLGGSSVLTPLNALA). Ser-180 lines the Mo-bis(molybdopterin guanine dinucleotide) pocket.

It belongs to the prokaryotic molybdopterin-containing oxidoreductase family. The cofactor is Mo-bis(molybdopterin guanine dinucleotide). Predicted to be exported by the Tat system. The position of the signal peptide cleavage has been experimentally proven.

It localises to the periplasm. The enzyme catalyses trimethylamine + 2 Fe(III)-[cytochrome c] + H2O = trimethylamine N-oxide + 2 Fe(II)-[cytochrome c] + 3 H(+). Functionally, reduces trimethylamine-N-oxide (TMAO) into trimethylamine; an anaerobic reaction coupled to energy-yielding reactions. This is Trimethylamine-N-oxide reductase (torA) from Shewanella massilia.